A 156-amino-acid polypeptide reads, in one-letter code: Protein FAM162A (156 aa).

Positions 37 to 57 are disordered; it reads TNGFCSKPQESPKPPDQHTYS. Positions 78-104 are required for proapoptotic activity; it reads RFKKEDEIPETVSFEMLDAAKNKVRVK. A helical membrane pass occupies residues 105–122; the sequence is ISYVMIALTVAGCVLMVI.

This sequence belongs to the UPF0389 family. As to quaternary structure, interacts with HSP90AB1; HSP90AB1 is essential for FAM162A mitochondrial localization and pro-apoptotic activity. Interacts with VDAC2; the interaction is probably involved in inducing mitochondrial permeability transition.

The protein localises to the mitochondrion membrane. Functionally, proposed to be involved in regulation of apoptosis; the exact mechanism may differ between cell types/tissues. May be involved in hypoxia-induced cell death of transformed cells implicating cytochrome C release and caspase activation (such as CASP9) and inducing mitochondrial permeability transition. May be involved in hypoxia-induced cell death of neuronal cells probably by promoting release of AIFM1 from mitochondria to cytoplasm and its translocation to the nucleus; however, the involvement of caspases has been reported conflictingly. The sequence is that of Protein FAM162A (FAM162A) from Bos taurus (Bovine).